The chain runs to 565 residues: Protein priB (565 aa).

Residues 20-50 constitute a DNA-binding region (zn(2)-C6 fungal-type); it reads CTTCRAAKMKCVGAEDGQRQCQRCKRANVQC. Disordered regions lie at residues 82–170 and 195–224; these read AKSK…SDRA and NPED…APAG. The span at 90–111 shows a compositional bias: basic and acidic residues; sequence DARHSSSYRDSHPSLGEPDDRY. Low complexity predominate over residues 129–155; the sequence is SNLPPLNLPSYPDAASEYTASSTSSRT. Over residues 203 to 215 the composition is skewed to polar residues; it reads GPSSVRCSETYSP.

Its subcellular location is the nucleus. This is Protein priB (priB) from Lentinula edodes (Shiitake mushroom).